The primary structure comprises 272 residues: Shikimate dehydrogenase (NADP(+)) (272 aa).

Shikimate is bound by residues 14–16 and T61; that span reads SLS. Residue K65 is the Proton acceptor of the active site. D102 contacts shikimate. NADP(+) contacts are provided by residues 127–131, 151–156, and L215; these read GAGGA and NRTPSK. Position 217 (Y217) interacts with shikimate. G239 is an NADP(+) binding site.

This sequence belongs to the shikimate dehydrogenase family. Homodimer.

The enzyme catalyses shikimate + NADP(+) = 3-dehydroshikimate + NADPH + H(+). The protein operates within metabolic intermediate biosynthesis; chorismate biosynthesis; chorismate from D-erythrose 4-phosphate and phosphoenolpyruvate: step 4/7. Its function is as follows. Involved in the biosynthesis of the chorismate, which leads to the biosynthesis of aromatic amino acids. Catalyzes the reversible NADPH linked reduction of 3-dehydroshikimate (DHSA) to yield shikimate (SA). The protein is Shikimate dehydrogenase (NADP(+)) of Coxiella burnetii (strain CbuG_Q212) (Coxiella burnetii (strain Q212)).